Here is a 62-residue protein sequence, read N- to C-terminus: Enterocin E-760 (62 aa).

It is found in the secreted. Bacteriocin active against the Gram-negative bacteria S.enteritidis, S.choleraesuis, S.typhimurium, S.gallinarum, E.coli O157:H7, Y.enterocolitica, C.freundii, K.pneumoniae, S.dysentriae, P.aeruginosa, P.mirabilis, M.morganii, C.jejuni and 20 other Campylobacter isolates, and the Gram-positive bacteria S.aureus, S.epidermidis and L.monocytogenes. The chain is Enterocin E-760 from Enterococcus sp.